The chain runs to 227 residues: Cytochrome c oxidase subunit 2 (227 aa).

Topologically, residues 1-14 (MAYPMQLGFQDATS) are mitochondrial intermembrane. The helical transmembrane segment at 15–45 (PIMEELLHFHDHTLMIVFLISSLVLYIISLM) threads the bilayer. Residues 46-59 (LTTKLTHTSTMDAQ) are Mitochondrial matrix-facing. The helical transmembrane segment at 60–87 (EVETIWTILPAIILILIALPSLRILYMM) threads the bilayer. Topologically, residues 88–227 (DEINNPSLTV…YFEKWSASML (140 aa)) are mitochondrial intermembrane. Residues H161, C196, E198, C200, H204, and M207 each contribute to the Cu cation site. E198 is a binding site for Mg(2+). Phosphotyrosine is present on Y218.

Belongs to the cytochrome c oxidase subunit 2 family. As to quaternary structure, component of the cytochrome c oxidase (complex IV, CIV), a multisubunit enzyme composed of 14 subunits. The complex is composed of a catalytic core of 3 subunits MT-CO1, MT-CO2 and MT-CO3, encoded in the mitochondrial DNA, and 11 supernumerary subunits COX4I, COX5A, COX5B, COX6A, COX6B, COX6C, COX7A, COX7B, COX7C, COX8 and NDUFA4, which are encoded in the nuclear genome. The complex exists as a monomer or a dimer and forms supercomplexes (SCs) in the inner mitochondrial membrane with NADH-ubiquinone oxidoreductase (complex I, CI) and ubiquinol-cytochrome c oxidoreductase (cytochrome b-c1 complex, complex III, CIII), resulting in different assemblies (supercomplex SCI(1)III(2)IV(1) and megacomplex MCI(2)III(2)IV(2)). Found in a complex with TMEM177, COA6, COX18, COX20, SCO1 and SCO2. Interacts with TMEM177 in a COX20-dependent manner. Interacts with COX20. Interacts with COX16. The cofactor is Cu cation.

The protein resides in the mitochondrion inner membrane. The enzyme catalyses 4 Fe(II)-[cytochrome c] + O2 + 8 H(+)(in) = 4 Fe(III)-[cytochrome c] + 2 H2O + 4 H(+)(out). Functionally, component of the cytochrome c oxidase, the last enzyme in the mitochondrial electron transport chain which drives oxidative phosphorylation. The respiratory chain contains 3 multisubunit complexes succinate dehydrogenase (complex II, CII), ubiquinol-cytochrome c oxidoreductase (cytochrome b-c1 complex, complex III, CIII) and cytochrome c oxidase (complex IV, CIV), that cooperate to transfer electrons derived from NADH and succinate to molecular oxygen, creating an electrochemical gradient over the inner membrane that drives transmembrane transport and the ATP synthase. Cytochrome c oxidase is the component of the respiratory chain that catalyzes the reduction of oxygen to water. Electrons originating from reduced cytochrome c in the intermembrane space (IMS) are transferred via the dinuclear copper A center (CU(A)) of subunit 2 and heme A of subunit 1 to the active site in subunit 1, a binuclear center (BNC) formed by heme A3 and copper B (CU(B)). The BNC reduces molecular oxygen to 2 water molecules using 4 electrons from cytochrome c in the IMS and 4 protons from the mitochondrial matrix. The chain is Cytochrome c oxidase subunit 2 (MT-CO2) from Syncerus caffer (African buffalo).